We begin with the raw amino-acid sequence, 193 residues long: Putative RNA methyltransferase At5g10620 (193 aa).

S-adenosyl-L-methionine is bound by residues L110, G142, and 161–166 (LSSMVL).

The protein belongs to the RNA methyltransferase RlmH family.

This is Putative RNA methyltransferase At5g10620 from Arabidopsis thaliana (Mouse-ear cress).